Consider the following 858-residue polypeptide: Leucine--tRNA ligase (858 aa).

Positions 53-63 (PYPSGNLHMGH) match the 'HIGH' region motif. The short motif at 622–626 (KMSKS) is the 'KMSKS' region element. K625 is a binding site for ATP.

This sequence belongs to the class-I aminoacyl-tRNA synthetase family.

Its subcellular location is the cytoplasm. It carries out the reaction tRNA(Leu) + L-leucine + ATP = L-leucyl-tRNA(Leu) + AMP + diphosphate. The protein is Leucine--tRNA ligase of Prochlorococcus marinus subsp. pastoris (strain CCMP1986 / NIES-2087 / MED4).